Reading from the N-terminus, the 150-residue chain is Ankyrin repeat protein C18/B24 (150 aa).

Residues 41–73 (ENKTLLYYAVDVNNIQFAKRLLEYGASVTTSRS) form an ANK repeat.

The polypeptide is Ankyrin repeat protein C18/B24 (Vaccinia virus (strain Copenhagen) (VACV)).